We begin with the raw amino-acid sequence, 516 residues long: Multicopper oxidase CueO (516 aa).

The segment at residues 1-28 (MQRRDFLKYSVALGVASALPLWSRAVFA) is a signal peptide (tat-type signal). Plastocyanin-like domains follow at residues 55 to 165 (GQST…IEDD) and 227 to 292 (PRGW…DNKP). Cu cation is bound by residues His-101, His-103, His-141, and His-143. A methionine-rich region region spans residues 355 to 400 (MDPMLDMMGMQMLMEKYGDQAMAGMDHSQMMGHMGHGNMNHMNHGG). A Plastocyanin-like 3 domain is found at 402–516 (FDFHHANKIN…DTGMMLGFTV (115 aa)). Residues His-443, His-446, His-448, His-499, Cys-500, His-501, and His-505 each coordinate Cu cation.

This sequence belongs to the multicopper oxidase family. Monomer. The cofactor is Cu cation. Post-translationally, exported by the Tat system. The position of the signal peptide cleavage has been experimentally proven.

It localises to the periplasm. It carries out the reaction 4 Cu(+) + O2 + 4 H(+) = 4 Cu(2+) + 2 H2O. Its activity is regulated as follows. Ferroxidase and phenoloxidase activities are enhanced considerably in the presence of excess copper ions. A labile regulatory copper ion near the T1 copper site is important for the copper associated activation of enzyme activity. Ag(+) acts as a potent inhibitor of oxidase activity by binding at Cu(+) binding sites, blocking Cu(+) substrate binding and oxidation. pPD oxidase activity is strongly inhibited by sodium azide, an inhibitor of the electron transfer. In terms of biological role, multicopper oxidase involved in copper homeostasis and copper tolerance under aerobic conditions. Is responsible for the oxidation of Cu(+) to the less harmful Cu(2+) in the periplasm, thereby preventing Cu(+) from entering the cytoplasm. Probably primarily functions as a cuprous oxidase in vivo. Its function is as follows. In vitro, in the presence of excess copper ions, exhibits ferroxidase and phenoloxidase activities. Fe(2+) is an excellent substrate in the presence of excess Cu(2+), but is inactive in the absence of Cu(2+). Oxidizes the phenolate iron siderophores enterobactin, 2,3-dihydroxybenzoate (2,3-DHB) and 3-hydroxyanthranilate (3-HAA). Oxidation and thus inactivation of enterobactin could protect cells from the interaction of enterobactin with copper and play a central role as an interface between copper detoxification and iron homeostasis. Also oxidizes a variety of phenolic model substrates, including 2,2'-azinobis(3-ethylbenzthiazolinesulfonic acid) (ABTS), p-phenylenediamine (pPD), 2,6-dimethoxyphenol (2,6-DMP) and 3,4-dihydroxybenzoic acid (3,4-DHB). In Escherichia coli (strain K12), this protein is Multicopper oxidase CueO.